A 66-amino-acid polypeptide reads, in one-letter code: DNA gyrase inhibitor YacG (66 aa).

Positions 9, 12, 28, and 32 each coordinate Zn(2+). The interval 45-66 (HKIAGSEESEDELYSGDLEPRH) is disordered.

The protein belongs to the DNA gyrase inhibitor YacG family. Interacts with GyrB. The cofactor is Zn(2+).

In terms of biological role, inhibits all the catalytic activities of DNA gyrase by preventing its interaction with DNA. Acts by binding directly to the C-terminal domain of GyrB, which probably disrupts DNA binding by the gyrase. The protein is DNA gyrase inhibitor YacG of Pseudomonas putida (strain ATCC 47054 / DSM 6125 / CFBP 8728 / NCIMB 11950 / KT2440).